The sequence spans 129 residues: Small ribosomal subunit protein uS11 (129 aa).

Belongs to the universal ribosomal protein uS11 family. As to quaternary structure, part of the 30S ribosomal subunit. Interacts with proteins S7 and S18. Binds to IF-3.

Located on the platform of the 30S subunit, it bridges several disparate RNA helices of the 16S rRNA. Forms part of the Shine-Dalgarno cleft in the 70S ribosome. In Pseudomonas putida (strain GB-1), this protein is Small ribosomal subunit protein uS11.